A 560-amino-acid chain; its full sequence is S100P-binding protein (560 aa).

Disordered regions lie at residues 259–292 (SDIP…ESTP) and 313–400 (SSSS…GKSF). The span at 313 to 352 (SSSSLQLPETSLASSTEPSPSLQLSASSVTAMNGQNNSNK) shows a compositional bias: polar residues. Residues 378–387 (QKVEPKKNKP) show a composition bias toward basic and acidic residues.

It localises to the nucleus. The protein is S100P-binding protein (s100pbp) of Xenopus laevis (African clawed frog).